Reading from the N-terminus, the 492-residue chain is MDPYKYRPSSAYNAPFYTTNGGAPVSNNISSLTIGERGPVLLEDYHLIEKVANFTRERIPERVVHARGISAKGFFEVTHDISNLTCADFLRAPGVQTPVIVRFSTVVHERASPETMRDIRGFAVKFYTREGNFDLVGNNTPVFFIRDGIQFPDVVHALKPNPKTNIQEYWRILDYMSHLPESLLTWCWMFDDVGIPQDYRHMEGFGVHTYTLIAKSGKVLFVKFHWKPTCGIKNLTDEEAKVVGGANHSHATKDLHDAIASGNYPEWKLFIQTMDPADEDKFDFDPLDVTKIWPEDILPLQPVGRLVLNRTIDNFFNETEQLAFNPGLVVPGIYYSDDKLLQCRIFAYGDTQRHRLGPNYLQLPVNAPKCAHHNNHHEGFMNFMHRDEEINYYPSKFDPVRCAEKVPTPTNSYTGIRTKCVIKKENNFKQAGDRYRSWAPDRQDRFVKRWVEILSEPRLTHEIRGIWISYWSQADRSLGQKLASRLNVRPSI.

Catalysis depends on residues histidine 65 and asparagine 138. Tyrosine 348 contacts heme.

This sequence belongs to the catalase family. As to quaternary structure, homotetramer and heterotetramer. At least six or seven isozymes are produced from a mixture of 3 gene products. Interacts with NCA1. Interacts with LSD1. Requires heme as cofactor.

Its subcellular location is the peroxisome. It catalyses the reaction 2 H2O2 = O2 + 2 H2O. In terms of biological role, occurs in almost all aerobically respiring organisms and serves to protect cells from the toxic effects of hydrogen peroxide. This is Catalase-3 (CAT3) from Arabidopsis thaliana (Mouse-ear cress).